Reading from the N-terminus, the 40-residue chain is Photosystem II reaction center protein T (40 aa).

Residues 3-23 (ALVYTFLLVGTLGIIFFAIFF) traverse the membrane as a helical segment.

It belongs to the PsbT family. PSII is composed of 1 copy each of membrane proteins PsbA, PsbB, PsbC, PsbD, PsbE, PsbF, PsbH, PsbI, PsbJ, PsbK, PsbL, PsbM, PsbT, PsbY, PsbZ, Psb30/Ycf12, at least 3 peripheral proteins of the oxygen-evolving complex and a large number of cofactors. It forms dimeric complexes.

Its subcellular location is the plastid. It is found in the chloroplast thylakoid membrane. Found at the monomer-monomer interface of the photosystem II (PS II) dimer, plays a role in assembly and dimerization of PSII. PSII is a light-driven water plastoquinone oxidoreductase, using light energy to abstract electrons from H(2)O, generating a proton gradient subsequently used for ATP formation. The sequence is that of Photosystem II reaction center protein T from Anthoceros angustus (Hornwort).